Here is a 366-residue protein sequence, read N- to C-terminus: Glutamate 5-kinase (366 aa).

Lys-17 provides a ligand contact to ATP. 3 residues coordinate substrate: Ser-57, Asp-144, and Asn-156. Residues 176–177 and 216–222 contribute to the ATP site; these read SD and TGGMVSK. A PUA domain is found at 278 to 356; the sequence is SGALTLDDGA…SDLPAEMRRP (79 aa).

It belongs to the glutamate 5-kinase family.

The protein localises to the cytoplasm. The catalysed reaction is L-glutamate + ATP = L-glutamyl 5-phosphate + ADP. It functions in the pathway amino-acid biosynthesis; L-proline biosynthesis; L-glutamate 5-semialdehyde from L-glutamate: step 1/2. Its function is as follows. Catalyzes the transfer of a phosphate group to glutamate to form L-glutamate 5-phosphate. This Mycolicibacterium vanbaalenii (strain DSM 7251 / JCM 13017 / BCRC 16820 / KCTC 9966 / NRRL B-24157 / PYR-1) (Mycobacterium vanbaalenii) protein is Glutamate 5-kinase.